Consider the following 321-residue polypeptide: Aspartate carbamoyltransferase catalytic subunit (321 aa).

Positions 65 and 66 each coordinate carbamoyl phosphate. Position 93 (K93) interacts with L-aspartate. 3 residues coordinate carbamoyl phosphate: R115, H143, and Q146. L-aspartate is bound by residues R176 and R230. 2 residues coordinate carbamoyl phosphate: G271 and P272.

The protein belongs to the aspartate/ornithine carbamoyltransferase superfamily. ATCase family. As to quaternary structure, heterododecamer (2C3:3R2) of six catalytic PyrB chains organized as two trimers (C3), and six regulatory PyrI chains organized as three dimers (R2).

The enzyme catalyses carbamoyl phosphate + L-aspartate = N-carbamoyl-L-aspartate + phosphate + H(+). The protein operates within pyrimidine metabolism; UMP biosynthesis via de novo pathway; (S)-dihydroorotate from bicarbonate: step 2/3. In terms of biological role, catalyzes the condensation of carbamoyl phosphate and aspartate to form carbamoyl aspartate and inorganic phosphate, the committed step in the de novo pyrimidine nucleotide biosynthesis pathway. The sequence is that of Aspartate carbamoyltransferase catalytic subunit from Bartonella bacilliformis (strain ATCC 35685 / KC583 / Herrer 020/F12,63).